Consider the following 411-residue polypeptide: Putative acid phosphatase 10 (411 aa).

The active-site Nucleophile is H33. Residue D313 is the Proton donor of the active site. C379 and C385 are disulfide-bonded.

Belongs to the histidine acid phosphatase family.

The catalysed reaction is a phosphate monoester + H2O = an alcohol + phosphate. The protein is Putative acid phosphatase 10 (pho-10) of Caenorhabditis elegans.